The chain runs to 479 residues: RAC-gamma serine/threonine-protein kinase (479 aa).

An N-acetylserine modification is found at Ser-2. The PH domain maps to 5–107 (TIVKEGWVQK…WTEAIQAVAD (103 aa)). A disulfide bridge connects residues Cys-59 and Cys-76. Positions 148-405 (FDYLKLLGKG…AKEIMRHSFF (258 aa)) constitute a Protein kinase domain. ATP is bound by residues 154-162 (LGKGTFGKV) and Lys-177. Catalysis depends on Asp-271, which acts as the Proton acceptor. The cysteines at positions 293 and 307 are disulfide-linked. Residue Thr-302 is glycosylated (O-linked (GlcNAc) threonine). Thr-305 carries the post-translational modification Phosphothreonine; by PDPK1. Residue Thr-309 is glycosylated (O-linked (GlcNAc) threonine). Residues 406–479 (SGVNWQDVYD…QFSYSASGRE (74 aa)) form the AGC-kinase C-terminal domain. Thr-447 is modified (phosphothreonine). A disordered region spans residues 458–479 (DCMDNERRPHFPQFSYSASGRE). A Phosphoserine; by PKC/PRKCZ modification is found at Ser-472. O-linked (GlcNAc) serine; alternate glycosylation is present at Ser-472.

It belongs to the protein kinase superfamily. AGC Ser/Thr protein kinase family. RAC subfamily. As to quaternary structure, interacts (via PH domain) with TCL1A; this enhances AKT3 phosphorylation and activation. Interacts with TRAF6. Interacts with KCTD20. Interacts with BTBD10. Post-translationally, phosphorylation on Thr-305 and Ser-472 is required for full activity. Phosphorylation of the activation loop at Thr-305 by PDPK1/PDK1 is a prerequisite for full activation. Phosphorylation at Ser-472 by mTORC2 in response to growth factors plays a key role in AKT1 activation by facilitating subsequent phosphorylation of the activation loop by PDPK1/PDK1. In terms of processing, ubiquitinated. When fully phosphorylated and translocated into the nucleus, undergoes 'Lys-48'-polyubiquitination catalyzed by TTC3, leading to its degradation by the proteasome. O-GlcNAcylation at Thr-302 and Thr-309 inhibits activating phosphorylation at Thr-305 via disrupting the interaction between AKT and PDPK1/PDK1. As to expression, in adult tissues, it is highly expressed in brain, lung and kidney, but weakly in heart, testis and liver. In fetal tissues, it is highly expressed in heart, liver and brain and not at all in kidney.

The protein localises to the nucleus. It localises to the cytoplasm. It is found in the membrane. The enzyme catalyses L-seryl-[protein] + ATP = O-phospho-L-seryl-[protein] + ADP + H(+). It catalyses the reaction L-threonyl-[protein] + ATP = O-phospho-L-threonyl-[protein] + ADP + H(+). Two specific sites, one in the kinase domain (Thr-305) and the other in the C-terminal regulatory region (Ser-472), need to be phosphorylated for its full activation. IGF-1 leads to the activation of AKT3, which may play a role in regulating cell survival. AKT3 is one of 3 closely related serine/threonine-protein kinases (AKT1, AKT2 and AKT3) called the AKT kinase, and which regulate many processes including metabolism, proliferation, cell survival, growth and angiogenesis. This is mediated through serine and/or threonine phosphorylation of a range of downstream substrates. Over 100 substrate candidates have been reported so far, but for most of them, no isoform specificity has been reported. AKT3 is the least studied AKT isoform. It plays an important role in brain development and is crucial for the viability of malignant glioma cells. AKT3 isoform may also be the key molecule in up-regulation and down-regulation of MMP13 via IL13. Required for the coordination of mitochondrial biogenesis with growth factor-induced increases in cellular energy demands. Down-regulation by RNA interference reduces the expression of the phosphorylated form of BAD, resulting in the induction of caspase-dependent apoptosis. The chain is RAC-gamma serine/threonine-protein kinase (AKT3) from Homo sapiens (Human).